The chain runs to 568 residues: 2-isopropylmalate synthase (568 aa).

Positions 37-313 (PRWLSTDLRD…DPMIDFSNID (277 aa)) constitute a Pyruvate carboxyltransferase domain. Mg(2+) is bound by residues D46, H252, H254, and N288. The segment at 455–568 (EGVVGVMAYR…CSAVNRAQQS (114 aa)) is regulatory domain.

Belongs to the alpha-IPM synthase/homocitrate synthase family. LeuA type 2 subfamily. Homodimer. It depends on Mg(2+) as a cofactor.

It is found in the cytoplasm. It carries out the reaction 3-methyl-2-oxobutanoate + acetyl-CoA + H2O = (2S)-2-isopropylmalate + CoA + H(+). The protein operates within amino-acid biosynthesis; L-leucine biosynthesis; L-leucine from 3-methyl-2-oxobutanoate: step 1/4. Its function is as follows. Catalyzes the condensation of the acetyl group of acetyl-CoA with 3-methyl-2-oxobutanoate (2-ketoisovalerate) to form 3-carboxy-3-hydroxy-4-methylpentanoate (2-isopropylmalate). In Thermobifida fusca (strain YX), this protein is 2-isopropylmalate synthase.